Here is a 448-residue protein sequence, read N- to C-terminus: tRNA modification GTPase MnmE (448 aa).

(6S)-5-formyl-5,6,7,8-tetrahydrofolate contacts are provided by R21, E80, and K119. The TrmE-type G domain maps to 215-370 (GVKLAIVGRP…LSEEILKKVG (156 aa)). K(+) is bound at residue N225. Residues 225–230 (NVGKSS), 244–250 (TDIAGTT), and 269–272 (DTAG) contribute to the GTP site. S229 contributes to the Mg(2+) binding site. Positions 244, 246, and 249 each coordinate K(+). Residue T250 coordinates Mg(2+). K448 serves as a coordination point for (6S)-5-formyl-5,6,7,8-tetrahydrofolate.

The protein belongs to the TRAFAC class TrmE-Era-EngA-EngB-Septin-like GTPase superfamily. TrmE GTPase family. As to quaternary structure, homodimer. Heterotetramer of two MnmE and two MnmG subunits. Requires K(+) as cofactor.

The protein resides in the cytoplasm. Exhibits a very high intrinsic GTPase hydrolysis rate. Involved in the addition of a carboxymethylaminomethyl (cmnm) group at the wobble position (U34) of certain tRNAs, forming tRNA-cmnm(5)s(2)U34. The polypeptide is tRNA modification GTPase MnmE (Aquifex aeolicus (strain VF5)).